The chain runs to 212 residues: Ribonuclease P protein component 3 (212 aa).

This sequence belongs to the eukaryotic/archaeal RNase P protein component 3 family. In terms of assembly, consists of a catalytic RNA component and at least 4-5 protein subunits.

The protein resides in the cytoplasm. It carries out the reaction Endonucleolytic cleavage of RNA, removing 5'-extranucleotides from tRNA precursor.. Its function is as follows. Part of ribonuclease P, a protein complex that generates mature tRNA molecules by cleaving their 5'-ends. This chain is Ribonuclease P protein component 3, found in Pyrococcus abyssi (strain GE5 / Orsay).